The following is a 375-amino-acid chain: Phosphate acyltransferase (375 aa).

Residues 354-375 form a disordered region; it reads AQDDATSADADAPGDSETGSTN. Over residues 356 to 368 the composition is skewed to low complexity; the sequence is DDATSADADAPGD.

The protein belongs to the PlsX family. Homodimer. Probably interacts with PlsY.

The protein localises to the cytoplasm. The enzyme catalyses a fatty acyl-[ACP] + phosphate = an acyl phosphate + holo-[ACP]. Its pathway is lipid metabolism; phospholipid metabolism. Catalyzes the reversible formation of acyl-phosphate (acyl-PO(4)) from acyl-[acyl-carrier-protein] (acyl-ACP). This enzyme utilizes acyl-ACP as fatty acyl donor, but not acyl-CoA. The polypeptide is Phosphate acyltransferase (Ruegeria sp. (strain TM1040) (Silicibacter sp.)).